A 334-amino-acid chain; its full sequence is Probable 2-ketogluconate reductase (334 aa).

NAD(+)-binding positions include 164–165, 244–246, and Asp270; these read RI and AGR. The active site involves Arg246. Residue Glu275 is part of the active site. Catalysis depends on His294, which acts as the Proton donor. 294–297 serves as a coordination point for NAD(+); sequence HIGT.

The protein belongs to the D-isomer specific 2-hydroxyacid dehydrogenase family.

It is found in the cytoplasm. It carries out the reaction D-gluconate + NADP(+) = 2-dehydro-D-gluconate + NADPH + H(+). In terms of biological role, catalyzes the NADPH-dependent reduction of 2,5-diketo-D-gluconate (25DKG) to 5-keto-D-gluconate (5KDG), 2-keto-D-gluconate (2KDG) to D-gluconate, and 2-keto-L-gulonate (2KLG) to L-idonate (IA). This Dictyostelium discoideum (Social amoeba) protein is Probable 2-ketogluconate reductase (tkrA).